The sequence spans 306 residues: UDP-N-acetylenolpyruvoylglucosamine reductase (306 aa).

Residues 33–197 (TGGEADFYLS…LEAAFTLEPG (165 aa)) enclose the FAD-binding PCMH-type domain. Arginine 176 is a catalytic residue. Residue serine 226 is the Proton donor of the active site. Glutamate 296 is an active-site residue.

This sequence belongs to the MurB family. The cofactor is FAD.

Its subcellular location is the cytoplasm. It carries out the reaction UDP-N-acetyl-alpha-D-muramate + NADP(+) = UDP-N-acetyl-3-O-(1-carboxyvinyl)-alpha-D-glucosamine + NADPH + H(+). It participates in cell wall biogenesis; peptidoglycan biosynthesis. In terms of biological role, cell wall formation. This chain is UDP-N-acetylenolpyruvoylglucosamine reductase, found in Staphylococcus epidermidis (strain ATCC 35984 / DSM 28319 / BCRC 17069 / CCUG 31568 / BM 3577 / RP62A).